An 864-amino-acid chain; its full sequence is Leucine--tRNA ligase (864 aa).

The 'HIGH' region motif lies at 42–52 (PYPSGKLHMGH). The 'KMSKS' region signature appears at 624-628 (KMSKS). Residue K627 coordinates ATP.

The protein belongs to the class-I aminoacyl-tRNA synthetase family.

The protein resides in the cytoplasm. It carries out the reaction tRNA(Leu) + L-leucine + ATP = L-leucyl-tRNA(Leu) + AMP + diphosphate. The protein is Leucine--tRNA ligase of Burkholderia mallei (strain NCTC 10229).